A 397-amino-acid chain; its full sequence is Elongation factor Tu (397 aa).

The 198-residue stretch at 10–207 (KPHVNIGTIG…ACDSYIEEPE (198 aa)) folds into the tr-type G domain. Residues 19 to 26 (GHIDHGKT) are G1. Residue 19–26 (GHIDHGKT) coordinates GTP. Thr26 lines the Mg(2+) pocket. The interval 60–64 (GITIA) is G2. Residues 81–84 (DCPG) form a G3 region. Residues 81 to 85 (DCPGH) and 136 to 139 (NKCD) each bind GTP. Positions 136–139 (NKCD) are G4. Residues 174 to 176 (SAL) are G5.

It belongs to the TRAFAC class translation factor GTPase superfamily. Classic translation factor GTPase family. EF-Tu/EF-1A subfamily. Monomer.

It is found in the cytoplasm. The enzyme catalyses GTP + H2O = GDP + phosphate + H(+). In terms of biological role, GTP hydrolase that promotes the GTP-dependent binding of aminoacyl-tRNA to the A-site of ribosomes during protein biosynthesis. The chain is Elongation factor Tu from Maridesulfovibrio salexigens (strain ATCC 14822 / DSM 2638 / NCIMB 8403 / VKM B-1763) (Desulfovibrio salexigens).